Here is a 49-residue protein sequence, read N- to C-terminus: Disintegrin eristostatin (49 aa).

Residues 1 to 49 (QEEPCATGPCCRRCKFKRAGKVCRVARGDWNDDYCTGKSCDCPKNPWNG) enclose the Disintegrin domain. 4 disulfide bridges follow: Cys-5-Cys-14, Cys-10-Cys-35, Cys-11-Cys-40, and Cys-23-Cys-42. Residues 27–29 (RGD) carry the Cell attachment site motif.

The protein belongs to the venom metalloproteinase (M12B) family. P-II subfamily. P-IIa sub-subfamily. In terms of assembly, monomer. In terms of tissue distribution, expressed by the venom gland.

The protein localises to the secreted. Is a potent inhibitor of ADP-induced platelet aggregation. Acts by binding to alpha-IIb/beta-3 (ITGA2B/ITGB3) receptor on the platelet surface. Binds with the same high affinity to resting and activated platelets. Also binds the alpha-4/beta-1 (ITGA4/ITGB1) integrin. Is a potent inhibitor of human and murine melanoma metastases in mouse model systems, also due to the inhibition of binding between the alpha-4/beta-1 integrin and the vascular cell adhesion protein VCAM1. Reacts neither with the integrin alpha-V/beta-3 (ITGAV/ITGB3) vitronectin receptor nor with the integrin alpha-5/beta-1 (ITGA5/ITGB1) fibronectin receptor. Has no effect on cell proliferation or angiogenesis. Specifically inhibits cell migration on fibronectin, but not that on collagen IV or laminin. May involve fibronectin-binding integrins that mediate cell migration. This chain is Disintegrin eristostatin, found in Eristicophis macmahoni (Leaf-nosed viper).